A 589-amino-acid polypeptide reads, in one-letter code: NADP-dependent malic enzyme (589 aa).

The Proton donor role is filled by Tyr137. Arg190 provides a ligand contact to NAD(+). Lys208 functions as the Proton acceptor in the catalytic mechanism. Residues Glu280, Asp281, and Asp304 each coordinate a divalent metal cation. Asp304 is an NAD(+) binding site. NADP(+) is bound at residue 333-349 (LFLGAGEAGTGIAELIA). Asn445 serves as a coordination point for NAD(+).

This sequence belongs to the malic enzymes family. Homotetramer. It depends on Mg(2+) as a cofactor. Mn(2+) serves as cofactor.

Its subcellular location is the cytoplasm. It catalyses the reaction (S)-malate + NADP(+) = pyruvate + CO2 + NADPH. The enzyme catalyses oxaloacetate + H(+) = pyruvate + CO2. In Phaseolus vulgaris (Kidney bean), this protein is NADP-dependent malic enzyme (ME1).